The sequence spans 430 residues: Pre-B-cell leukemia transcription factor 2 (430 aa).

Residues M1–D52 form a disordered region. Over residues G13–R48 the composition is skewed to gly residues. Positions R48–D243 constitute a PBC domain. Residues D55–G134 form a PBC-A region. Residues S136, S151, and S159 each carry the phosphoserine modification. The PBC-B stretch occupies residues A137–D243. Residues A244 to I306 constitute a DNA-binding region (homeobox; TALE-type). Disordered regions lie at residues G327–F347 and L375–N430. Phosphoserine is present on residues S330 and S395. Positions V409–T418 are enriched in polar residues.

Belongs to the TALE/PBX homeobox family. In terms of assembly, forms heterodimers with MEIS1 and heterotrimers with MEIS1 and HOXA9. Interacts with PBXIP1.

It is found in the nucleus. Functionally, transcriptional activator that binds the sequence 5'-ATCAATCAA-3'. Activates transcription of PF4 in complex with MEIS1. This chain is Pre-B-cell leukemia transcription factor 2 (Pbx2), found in Mus musculus (Mouse).